A 323-amino-acid chain; its full sequence is 3-dehydroquinate synthase (323 aa).

This sequence belongs to the archaeal-type DHQ synthase family.

It carries out the reaction 2-amino-2,3,7-trideoxy-D-lyxo-hept-6-ulosonate + NAD(+) + H2O = 3-dehydroquinate + NH4(+) + NADH + H(+). Catalyzes the oxidative deamination and cyclization of 2-amino-3,7-dideoxy-D-threo-hept-6-ulosonic acid (ADH) to yield 3-dehydroquinate (DHQ), which is fed into the canonical shikimic pathway of aromatic amino acid biosynthesis. The chain is 3-dehydroquinate synthase from Archaeoglobus fulgidus (strain ATCC 49558 / DSM 4304 / JCM 9628 / NBRC 100126 / VC-16).